Here is a 114-residue protein sequence, read N- to C-terminus: Kita-kyushu lung cancer antigen 1 homolog (114 aa).

Topologically, residues 1–4 are cytoplasmic; sequence MNVY. The helical; Signal-anchor for type II membrane protein transmembrane segment at 5 to 22 threads the bilayer; the sequence is LLLASGILCALMTVFWKY. The Extracellular segment spans residues 23 to 114; sequence RRFQRNTGEM…RSASAHRKST (92 aa). Asparagine 84 is a glycosylation site (N-linked (GlcNAc...) asparagine).

The protein localises to the cell membrane. The polypeptide is Kita-kyushu lung cancer antigen 1 homolog (CT83) (Macaca fascicularis (Crab-eating macaque)).